The sequence spans 264 residues: Low molecular mass lipoprotein PBMHPC-23 (264 aa).

Positions 1-23 (MKFLVVFAVVRACVTPACAEMSA) are cleaved as a signal peptide.

This sequence belongs to the 30 kDa lipoprotein family.

It localises to the secreted. The chain is Low molecular mass lipoprotein PBMHPC-23 from Bombyx mori (Silk moth).